The chain runs to 227 residues: ATP-dependent dethiobiotin synthetase BioD (227 aa).

13–18 (NIGKTV) is a binding site for ATP. Threonine 17 is a Mg(2+) binding site. The active site involves lysine 38. ATP-binding positions include aspartate 55 and 116-119 (EGIG). Mg(2+) is bound by residues aspartate 55 and glutamate 116.

The protein belongs to the dethiobiotin synthetase family. As to quaternary structure, homodimer. The cofactor is Mg(2+).

The protein resides in the cytoplasm. The enzyme catalyses (7R,8S)-7,8-diammoniononanoate + CO2 + ATP = (4R,5S)-dethiobiotin + ADP + phosphate + 3 H(+). It participates in cofactor biosynthesis; biotin biosynthesis; biotin from 7,8-diaminononanoate: step 1/2. Catalyzes a mechanistically unusual reaction, the ATP-dependent insertion of CO2 between the N7 and N8 nitrogen atoms of 7,8-diaminopelargonic acid (DAPA, also called 7,8-diammoniononanoate) to form a ureido ring. The sequence is that of ATP-dependent dethiobiotin synthetase BioD from Buchnera aphidicola subsp. Baizongia pistaciae (strain Bp).